We begin with the raw amino-acid sequence, 1479 residues long: DNA-directed RNA polymerase subunit beta'' (1479 aa).

C220, C296, C303, and C306 together coordinate Zn(2+). Disordered regions lie at residues 618–640 and 663–756; these read TRAE…REDE and LEDE…KKEG. 3 stretches are compositionally biased toward acidic residues: residues 622–631, 704–717, and 731–749; these read DSEEEYETLE, DEYG…EDEY, and LEED…PEED.

The protein belongs to the RNA polymerase beta' chain family. RpoC2 subfamily. In plastids the minimal PEP RNA polymerase catalytic core is composed of four subunits: alpha, beta, beta', and beta''. When a (nuclear-encoded) sigma factor is associated with the core the holoenzyme is formed, which can initiate transcription. Zn(2+) serves as cofactor.

Its subcellular location is the plastid. The protein resides in the chloroplast. It carries out the reaction RNA(n) + a ribonucleoside 5'-triphosphate = RNA(n+1) + diphosphate. In terms of biological role, DNA-dependent RNA polymerase catalyzes the transcription of DNA into RNA using the four ribonucleoside triphosphates as substrates. The polypeptide is DNA-directed RNA polymerase subunit beta'' (Triticum aestivum (Wheat)).